We begin with the raw amino-acid sequence, 106 residues long: 1-deoxy-D-xylulose 5-phosphate reductoisomerase (106 aa).

D3 contacts Mn(2+). 1-deoxy-D-xylulose 5-phosphate contacts are provided by S4, E5, S29, H52, S65, N70, K71, and E74. Residue E5 participates in Mn(2+) binding. Residue E74 participates in Mn(2+) binding.

This sequence belongs to the DXR family. It depends on Mn(2+) as a cofactor. Requires Mg(2+) as cofactor.

Its subcellular location is the plastid. The protein resides in the chloroplast stroma. It carries out the reaction 2-C-methyl-D-erythritol 4-phosphate + NADP(+) = 1-deoxy-D-xylulose 5-phosphate + NADPH + H(+). Its pathway is isoprenoid biosynthesis; isopentenyl diphosphate biosynthesis via DXP pathway; isopentenyl diphosphate from 1-deoxy-D-xylulose 5-phosphate: step 1/6. Its function is as follows. Enzyme of the plastid non-mevalonate pathway for isoprenoid biosynthesis that catalyzes the NADPH-dependent rearrangement and reduction of 1-deoxy-D-xylulose-5-phosphate (DXP) to 2-C-methyl-D-erythritol 4-phosphate (MEP). Required for chloroplast development. This chain is 1-deoxy-D-xylulose 5-phosphate reductoisomerase, found in Origanum vulgare (Wild marjoram).